The sequence spans 142 residues: ATP synthase epsilon chain (142 aa).

It belongs to the ATPase epsilon chain family. F-type ATPases have 2 components, CF(1) - the catalytic core - and CF(0) - the membrane proton channel. CF(1) has five subunits: alpha(3), beta(3), gamma(1), delta(1), epsilon(1). CF(0) has three main subunits: a, b and c.

It localises to the cell inner membrane. Functionally, produces ATP from ADP in the presence of a proton gradient across the membrane. The chain is ATP synthase epsilon chain from Shewanella baltica (strain OS185).